Reading from the N-terminus, the 485-residue chain is N-succinylglutamate 5-semialdehyde dehydrogenase (485 aa).

Residue 220 to 225 participates in NAD(+) binding; it reads GSANTG. Residues glutamate 243 and cysteine 278 contribute to the active site.

Belongs to the aldehyde dehydrogenase family. AstD subfamily.

It carries out the reaction N-succinyl-L-glutamate 5-semialdehyde + NAD(+) + H2O = N-succinyl-L-glutamate + NADH + 2 H(+). The protein operates within amino-acid degradation; L-arginine degradation via AST pathway; L-glutamate and succinate from L-arginine: step 4/5. In terms of biological role, catalyzes the NAD-dependent reduction of succinylglutamate semialdehyde into succinylglutamate. This chain is N-succinylglutamate 5-semialdehyde dehydrogenase, found in Vibrio cholerae serotype O1 (strain M66-2).